The chain runs to 261 residues: tRNA 5-carboxymethoxyuridine methyltransferase (261 aa).

S-adenosyl-L-methionine contacts are provided by residues Arg-26, 52 to 53 (GG), Asp-73, 102 to 103 (AQ), and His-119.

The protein belongs to the class I-like SAM-binding methyltransferase superfamily. CmoM family.

The catalysed reaction is 5-carboxymethoxyuridine(34) in tRNA + S-adenosyl-L-methionine = 5-methoxycarbonylmethoxyuridine(34) in tRNA + S-adenosyl-L-homocysteine. In terms of biological role, catalyzes the methylation of 5-carboxymethoxyuridine (cmo5U) to form 5-methoxycarbonylmethoxyuridine (mcmo5U) at position 34 in tRNAs. Four tRNAs (tRNA(Ala1), tRNA(Ser1), tRNA(Pro3) and tRNA(Thr4)) are fully modified with mcmo5U in stationary-phase E.coli. Also present at low frequency in tRNA(Leu3) and tRNA(Val1). This Escherichia coli (strain K12) protein is tRNA 5-carboxymethoxyuridine methyltransferase.